A 66-amino-acid chain; its full sequence is Conotoxin Cal5.2 (66 aa).

A signal peptide spans 1–20 (MMYCLPVVCILLLLIPSSAT). Residues 21–51 (FVVESRLEKDQAQSFTGDAWKRVSPIHEMIQ) constitute a propeptide that is removed on maturation. Position 65 is a valine amide (V65).

It belongs to the conotoxin T superfamily. In terms of processing, contains 2 disulfide bonds that can be either 'C1-C3, C2-C4' or 'C1-C4, C2-C3', since these disulfide connectivities have been observed for conotoxins with cysteine framework V (for examples, see AC P0DQQ7 and AC P81755). In terms of tissue distribution, expressed by the venom duct.

It is found in the secreted. Its function is as follows. Probable neurotoxin with unknown target. Possibly targets ion channels. In Californiconus californicus (California cone), this protein is Conotoxin Cal5.2.